A 236-amino-acid chain; its full sequence is tRNA (guanine-N(7)-)-methyltransferase (236 aa).

The S-adenosyl-L-methionine site is built by aspartate 35, glutamate 60, asparagine 87, and aspartate 113. Aspartate 113 is a catalytic residue. The substrate site is built by lysine 117 and aspartate 149.

It belongs to the class I-like SAM-binding methyltransferase superfamily. TrmB family.

The catalysed reaction is guanosine(46) in tRNA + S-adenosyl-L-methionine = N(7)-methylguanosine(46) in tRNA + S-adenosyl-L-homocysteine. The protein operates within tRNA modification; N(7)-methylguanine-tRNA biosynthesis. Its function is as follows. Catalyzes the formation of N(7)-methylguanine at position 46 (m7G46) in tRNA. In Prochlorococcus marinus (strain MIT 9313), this protein is tRNA (guanine-N(7)-)-methyltransferase.